A 300-amino-acid polypeptide reads, in one-letter code: Meiosis-specific cyclin crs1 (300 aa).

One can recognise a Cyclin N-terminal domain in the interval 61-183 (IIEQEKKGLT…VLALLNFDIY (123 aa)).

Belongs to the cyclin family. Cyclin AB subfamily.

The protein resides in the cytoplasm. Its subcellular location is the nucleus. Its function is as follows. Has a role in meiotic chromosome segregation. The chain is Meiosis-specific cyclin crs1 (crs1) from Schizosaccharomyces pombe (strain 972 / ATCC 24843) (Fission yeast).